Here is a 377-residue protein sequence, read N- to C-terminus: MRDPAPSDTQKKRVIVGMSGGVDSSVSALLLMEQGYQVEGLFMKNWEEDDGTEYCTAMDDLADAQAVCDKIGIKLHTANFAAEYWDNVFEHFLAEYKAGRTPNPDILCNREIKFKAFLDYAMMLGADLIATGHYVRRRDIDGRTELLKGLDPNKDQSYFLHAVGGEQIAKTLFPVGELEKPEVRAIAEKHDLATAKKKDSTGICFIGERRFSDFLKQYLPAQPGEIKTTEGEVIGRHHGLMYHTIGQRQGLGIGGLKDAGEEPWYVLIKDLEHNELIVGQGNDHPWLFSRALLASDIYWVNPIDLSLPRRLTAKVRYRQSDQPCTLEKTTNGYRATFDDPQRAVTPGQSVVFYDGEICLGGGVIEVAEPWSSKDARP.

ATP-binding positions include 17 to 24 and Met-43; that span reads GMSGGVDS. Residues 103 to 105 form an interaction with target base in tRNA region; sequence NPD. Cys-108 serves as the catalytic Nucleophile. Cys-108 and Cys-204 form a disulfide bridge. Residue Gly-132 coordinates ATP. Residues 154 to 156 are interaction with tRNA; the sequence is KDQ. The active-site Cysteine persulfide intermediate is the Cys-204. The interaction with tRNA stretch occupies residues 316 to 317; that stretch reads RY.

This sequence belongs to the MnmA/TRMU family.

The protein localises to the cytoplasm. The catalysed reaction is S-sulfanyl-L-cysteinyl-[protein] + uridine(34) in tRNA + AH2 + ATP = 2-thiouridine(34) in tRNA + L-cysteinyl-[protein] + A + AMP + diphosphate + H(+). Functionally, catalyzes the 2-thiolation of uridine at the wobble position (U34) of tRNA, leading to the formation of s(2)U34. This Pseudomonas fluorescens (strain ATCC BAA-477 / NRRL B-23932 / Pf-5) protein is tRNA-specific 2-thiouridylase MnmA.